A 292-amino-acid chain; its full sequence is MAVSLNDIKTKIASTKNTSQITNAMQMVSAAKLGRSEEAARNFQVYAQKVRKLLTDILHGNGAGASTNPMLISRSVKKTGYIVITSDRGLVGGYNSSILKAVMELKEEYHPDGKGFEMICIGGMGADFFKARGIQPLYELRGLSDQPSFDQVRKIISKTVEMYQNELFDELYVCYNHHVNTLTSQMRVEQMLPIVDLDPNEADEEYSLTFELETSREEILEQLLPQFAESMIYGAIIDAKTAENAAGMTAMQTATDNAKKVINDLTIQYNRARQAAITQEITEIVAGASALE.

This sequence belongs to the ATPase gamma chain family. F-type ATPases have 2 components, CF(1) - the catalytic core - and CF(0) - the membrane proton channel. CF(1) has five subunits: alpha(3), beta(3), gamma(1), delta(1), epsilon(1). CF(0) has three main subunits: a, b and c.

The protein localises to the cell membrane. Its function is as follows. Produces ATP from ADP in the presence of a proton gradient across the membrane. The gamma chain is believed to be important in regulating ATPase activity and the flow of protons through the CF(0) complex. This chain is ATP synthase gamma chain, found in Streptococcus pneumoniae serotype 2 (strain D39 / NCTC 7466).